An 83-amino-acid polypeptide reads, in one-letter code: Large ribosomal subunit protein bL27 (83 aa).

It belongs to the bacterial ribosomal protein bL27 family.

This is Large ribosomal subunit protein bL27 (rpmA) from Thermotoga maritima (strain ATCC 43589 / DSM 3109 / JCM 10099 / NBRC 100826 / MSB8).